A 377-amino-acid chain; its full sequence is Apelin receptor (377 aa).

Residues 1-28 (MEDDGYNYYGADNQSECDYADWKPSGAL) lie on the Extracellular side of the membrane. A glycan (N-linked (GlcNAc...) asparagine) is linked at N13. 2 disulfide bridges follow: C17–C279 and C100–C179. The chain crosses the membrane as a helical span at residues 29 to 52 (IPAIYMLVFLLGTTGNGLVLWTVF). The Cytoplasmic portion of the chain corresponds to 53 to 62 (RTSREKRRSA). The helical transmembrane segment at 63–84 (DIFIASLAVADLTFVVTLPLWA) threads the bilayer. The Extracellular portion of the chain corresponds to 85–97 (TYTYREFDWPFGT). Residues 98 to 123 (FSCKLSSYLIFVNMYASVFCLTGLSF) traverse the membrane as a helical segment. Residues 124-144 (DRYLAIVRPVANARLRLRVSG) are Cytoplasmic-facing. The chain crosses the membrane as a helical span at residues 145 to 162 (AVATAVLWVLAALLAVPV). Over 163–196 (MVFRSTDASENGTKIQCYMDYSMVATSNSEWAWE) the chain is Extracellular. A glycan (N-linked (GlcNAc...) asparagine) is linked at N173. The helical transmembrane segment at 197–221 (VGLGVSSTAVGFVVPFTIMLTCYFF) threads the bilayer. The Cytoplasmic portion of the chain corresponds to 222–244 (IAQTIAGHFRKERIEGLRKRRRL). A helical membrane pass occupies residues 245–268 (LSIIVVLVVTFALCWMPYHLVKTL). The Extracellular segment spans residues 269–287 (YMLGSLLHWPCDFDIFLMN). Residues 288–310 (VFPYCTCISYVNSCLNPFLYAFF) form a helical membrane-spanning segment. The Cytoplasmic portion of the chain corresponds to 311–377 (DPRFRQACTS…IPYSQETLVD (67 aa)). The disordered stretch occupies residues 334 to 377 (HSSSAEKSASYSSGHSQGPGPNMGKGGEQMHEKSIPYSQETLVD). Over residues 335 to 349 (SSSAEKSASYSSGHS) the composition is skewed to low complexity.

This sequence belongs to the G-protein coupled receptor 1 family. As to quaternary structure, homodimer; dimerization inhibits APLNR-mediated G protein and beta-arrestin signaling pathways compared to monomeric APLNR. In terms of tissue distribution, expressed in coronary endothelial cells (at protein level). Expressed in the embryo, allantoic and endothelial precursor cells of the yolk sac at 8 days post-coitum (dpc). Expressed in the secondary heart field and somite at 8.25 dpc. Expressed in fetal allantoic endothelial cells at 9 dpc. Expressed in the allantoid and the invading fetal vasculature of the placenta at 9.5 dpc. Expressed in endothelial cells adjacent to syncytiotrophoblast cells at 10.5 dpc. Expressed weakly in the embryonic heart at 11.5 dpc. Expressed in the adult heart. Expressed in endothelial cells and cardiomyocytes and weakly expressed in fibroblasts.

Its subcellular location is the cell membrane. Functionally, g protein-coupled receptor for peptide hormones apelin (APLN) and apelin receptor early endogenous ligand (APELA), that plays a role in the regulation of normal cardiovascular function and fluid homeostasis. When acting as apelin receptor, activates both G(i) protein pathway that inhibits adenylate cyclase activity, and the beta-arrestin pathway leading to internalization of the receptor. APLNR/APJ receptor is also activated by mechanical strech in a G-protein-independent fashion to induce beta-arrestin signaling leading to cardiac hypertrophy. However, the presence of apelin ligand blunts cardiac hypertrophic induction from APLNR/APJ on response to pathological stimuli. Plays a key role in early development such as gastrulation, blood vessels formation and heart morphogenesis by acting as a receptor for APELA hormone. May promote angioblast migration toward the embryonic midline, i.e. the position of the future vessel formation, during vasculogenesis. Promotes sinus venosus (SV)-derived endothelial cells migration into the developing heart to promote coronary blood vessel development. Also plays a role in various processes in adults such as regulation of blood vessel formation, blood pressure and heart contractility and protection from cardiac hypertrophy and heart failure. The protein is Apelin receptor of Mus musculus (Mouse).